A 222-amino-acid chain; its full sequence is MNDGFAMNTHSKDERAPENGQAENMAVENGAEAAQAADRATPVSEEDVLLRLAKENEDLKERALRLTAEMENLRKRTQRDVADARVYGIANFARDMLTVSDNLQRALQAVSEEARAQADSGLKALVEGVEMTERAMLATLERHGVKRVDPNGEKFDPHFHQAMFEVPNADVPNNTVVQVVQPGYVIGDRVLRPAMVGVAKGGPKAETPAATSEQAAQGPEGA.

2 disordered regions span residues 1 to 21 (MNDG…ENGQ) and 200 to 222 (KGGP…PEGA).

This sequence belongs to the GrpE family. As to quaternary structure, homodimer.

The protein resides in the cytoplasm. Participates actively in the response to hyperosmotic and heat shock by preventing the aggregation of stress-denatured proteins, in association with DnaK and GrpE. It is the nucleotide exchange factor for DnaK and may function as a thermosensor. Unfolded proteins bind initially to DnaJ; upon interaction with the DnaJ-bound protein, DnaK hydrolyzes its bound ATP, resulting in the formation of a stable complex. GrpE releases ADP from DnaK; ATP binding to DnaK triggers the release of the substrate protein, thus completing the reaction cycle. Several rounds of ATP-dependent interactions between DnaJ, DnaK and GrpE are required for fully efficient folding. The polypeptide is Protein GrpE (Chelativorans sp. (strain BNC1)).